The sequence spans 100 residues: Putative septation protein SpoVG (100 aa).

It belongs to the SpoVG family.

Could be involved in septation. The polypeptide is Putative septation protein SpoVG (Clostridium novyi (strain NT)).